The primary structure comprises 227 residues: SEVPILTTKKLAWKTAIKELLWIWQLKSNDVNDLNKMSVHIWDQWKQEDGTIGHAYGFQLGKKNRSLNGEKVDQVDYLLHQLKNNPSSRRHITMLWNPDELDAMALTPCVYETQWYVKHGKLHLEVRARSNDMALGNPFNVFQYNVLQRMIAQVTGYELGEYIFNIGDCHVYTRHIDNLKIQMEREQFEAPELWINPEVKDFYDFTIDDFKLINYKHGDKLLFEVRV.

89–90 (RR) contacts dUMP. The active-site Nucleophile is the C109. DUMP is bound by residues 129–132 (RSND), N140, and 170–172 (HVY). D132 contributes to the (6R)-5,10-methylene-5,6,7,8-tetrahydrofolate binding site.

Belongs to the thymidylate synthase family. Bacterial-type ThyA subfamily. As to quaternary structure, homodimer.

It is found in the cytoplasm. The enzyme catalyses dUMP + (6R)-5,10-methylene-5,6,7,8-tetrahydrofolate = 7,8-dihydrofolate + dTMP. The protein operates within pyrimidine metabolism; dTTP biosynthesis. Catalyzes the reductive methylation of 2'-deoxyuridine-5'-monophosphate (dUMP) to 2'-deoxythymidine-5'-monophosphate (dTMP) while utilizing 5,10-methylenetetrahydrofolate (mTHF) as the methyl donor and reductant in the reaction, yielding dihydrofolate (DHF) as a by-product. This enzymatic reaction provides an intracellular de novo source of dTMP, an essential precursor for DNA biosynthesis. The sequence is that of Thymidylate synthase from Bacillus atrophaeus.